Consider the following 408-residue polypeptide: Acetate kinase (408 aa).

Asn7 is a binding site for Mg(2+). Lys14 lines the ATP pocket. Arg98 provides a ligand contact to substrate. Catalysis depends on Asp155, which acts as the Proton donor/acceptor. ATP contacts are provided by residues 214–218 (HLGNG), 289–291 (DLR), and 337–341 (GVGEN). Mg(2+) is bound at residue Glu390.

It belongs to the acetokinase family. As to quaternary structure, homodimer. Mg(2+) serves as cofactor. It depends on Mn(2+) as a cofactor.

It is found in the cytoplasm. The enzyme catalyses acetate + ATP = acetyl phosphate + ADP. The protein operates within metabolic intermediate biosynthesis; acetyl-CoA biosynthesis; acetyl-CoA from acetate: step 1/2. Functionally, catalyzes the formation of acetyl phosphate from acetate and ATP. Can also catalyze the reverse reaction. This chain is Acetate kinase, found in Cyanothece sp. (strain PCC 7425 / ATCC 29141).